Consider the following 337-residue polypeptide: MSFFGFGPAAELDIALTDGESRRRVEHKTEDGKKEKYFLFYDGETVSGRVTVNLRNPGKRLEHQGLKIEFIGQIELYYDRGNHHEFVSLVKDLARPGEISQSQSFDFEFTHVEKPYESYTGQNVKLRYFLRATLSRRLNDVVKEMDIVVHTLSTYPELNSSIKMEVGIEDCLHIEFEYNKSKYHLKDVIVGKIYFLLVRIKIKHMEIDIIKRETTGTGPNVYHENDTIAKYEIMDGAPVRGESIPIRLFLAGYELTPTMRDINKKFSVRYYLNLVLIDEEERRYFKQQEVVLWRKGDIVRKSMSHQAAIASQRFEGTSHPETRPQHSGAAAVEQEQE.

The disordered stretch occupies residues 311-337; sequence SQRFEGTSHPETRPQHSGAAAVEQEQE.

Belongs to the VPS26 family. In terms of assembly, component of the heterotrimeric retromer cargo-selective complex (CSC) which is believed to associate with variable sorting nexins to form functionally distinct retromer complex variants.

Its subcellular location is the cytoplasm. It is found in the membrane. The protein localises to the endosome. Acts as a component of the retromer cargo-selective complex (CSC). The CSC is believed to be the core functional component of retromer or respective retromer complex variants acting to prevent missorting of selected transmembrane cargo proteins into the lysosomal degradation pathway. Retromer mediates retrograde transport of cargo proteins from endosomes to the trans-Golgi network (TGN). The protein is Vacuolar protein sorting-associated protein 26B (vps26b) of Xenopus tropicalis (Western clawed frog).